The sequence spans 295 residues: Hydroxylase/desaturase efuI (295 aa).

It belongs to the asaB hydroxylase/desaturase family.

It participates in secondary metabolite biosynthesis; terpenoid biosynthesis. Hydroxylase/desaturase; part of the gene cluster that mediates the biosynthesis of enfumafungin, a glycosylated fernene-type triterpenoid with potent antifungal activity, mediated by its interaction with beta-1,3-glucan synthase and the fungal cell wall. The pathway begins with the terpene cyclase-glycosyl transferase fusion protein that most likely uses 2,3-oxidosqualene as substrate and catalyzes glycosylation immediately after cyclization. The fernene glycoside then could be processed by the desaturase efuI which catalyzes isomerization of a double bond established by efuA to form the core structure. The latter would then undergo a series of hydroxylations in unknown order at C-2, C-19, C-23 and C-25, which would be catalyzed by two of the three cytochrome P450 monooxygenases efuB, efuG or efuH. The hydroxy-group at C-25 becomes oxidized by the dehydrogenase efuE to enable a spontaneous, non-enzymatic hemiacetal formation with C-23. After hydroxylation at C-2, acetylation by the acetyltransferase efuC takes place. The final steps in enfumafungin biosynthesis require expansion of the 5-membered ring by lactonization via a Baeyer-Villiger reaction mediated by one of the BGC's cytochrome P450 monooxygenases (efuB, efuG or efuH) followed by ring cleavage. This type of reaction would establish a double bond between C-20 and C-21 which could be reduced by the reductase efuL to form the final product. The polypeptide is Hydroxylase/desaturase efuI (Hormonema carpetanum).